Reading from the N-terminus, the 208-residue chain is MVSGRVQALLEQLRAQGIRDELVLNALAAVPREKFIDEAFEHKAWENIALPIGQGQTISQPYMVARMTELLELTPQSRVLEIGTGSGYQTAILAHLVHHVCSVERIKGLQWQARRRLKQLDLHNVSTRHGDGWQGWQARAPFDAIIVTAAPPEIPTALMAQLDEGGILVLPVGDEQQFLKRVRRRGGEFIIDTVEAVRFVPLVKGELA.

Residue Ser-59 is part of the active site.

It belongs to the methyltransferase superfamily. L-isoaspartyl/D-aspartyl protein methyltransferase family.

The protein resides in the cytoplasm. The catalysed reaction is [protein]-L-isoaspartate + S-adenosyl-L-methionine = [protein]-L-isoaspartate alpha-methyl ester + S-adenosyl-L-homocysteine. In terms of biological role, catalyzes the methyl esterification of L-isoaspartyl residues in peptides and proteins that result from spontaneous decomposition of normal L-aspartyl and L-asparaginyl residues. It plays a role in the repair and/or degradation of damaged proteins. The protein is Protein-L-isoaspartate O-methyltransferase of Salmonella paratyphi A (strain ATCC 9150 / SARB42).